Here is a 289-residue protein sequence, read N- to C-terminus: Mitochondrial fission regulator 1-like (289 aa).

Residue Thr-27 is modified to Phosphothreonine. At Ser-38 the chain carries Phosphoserine. Ser-100 carries the post-translational modification Phosphoserine; by AMPK. Phosphoserine is present on residues Ser-107, Ser-221, and Ser-222. Ser-235 carries the post-translational modification Phosphoserine; by AMPK. Residues Ser-258 and Ser-270 each carry the phosphoserine modification.

It belongs to the MTFR1 family. In terms of processing, phosphorylated by AMPK. Upon stress, phosphorylation at Ser-100 and Ser-235 by AMPK is sufficient to induce mitochondrial fragmentation.

It is found in the mitochondrion outer membrane. Functionally, mitochondrial protein required for adaptation of miochondrial dynamics to metabolic changes. Regulates mitochondrial morphology at steady state and mediates AMPK-dependent stress-induced mitochondrial fragmentation via the control of OPA1 levels. This Mus musculus (Mouse) protein is Mitochondrial fission regulator 1-like (Mtfr1l).